A 424-amino-acid chain; its full sequence is Imidazolonepropionase (424 aa).

Fe(3+)-binding residues include histidine 84 and histidine 86. Histidine 84 and histidine 86 together coordinate Zn(2+). Residues arginine 93, tyrosine 156, and histidine 189 each coordinate 4-imidazolone-5-propanoate. An N-formimidoyl-L-glutamate-binding site is contributed by tyrosine 156. Histidine 254 contacts Fe(3+). Histidine 254 provides a ligand contact to Zn(2+). Position 257 (glutamate 257) interacts with 4-imidazolone-5-propanoate. A Fe(3+)-binding site is contributed by aspartate 328. Residue aspartate 328 coordinates Zn(2+). N-formimidoyl-L-glutamate contacts are provided by asparagine 330 and glycine 332. Serine 333 contacts 4-imidazolone-5-propanoate.

Belongs to the metallo-dependent hydrolases superfamily. HutI family. It depends on Zn(2+) as a cofactor. The cofactor is Fe(3+).

It is found in the cytoplasm. The enzyme catalyses 4-imidazolone-5-propanoate + H2O = N-formimidoyl-L-glutamate. It participates in amino-acid degradation; L-histidine degradation into L-glutamate; N-formimidoyl-L-glutamate from L-histidine: step 3/3. In terms of biological role, catalyzes the hydrolytic cleavage of the carbon-nitrogen bond in imidazolone-5-propanoate to yield N-formimidoyl-L-glutamate. It is the third step in the universal histidine degradation pathway. This chain is Imidazolonepropionase, found in Geobacillus sp. (strain WCH70).